We begin with the raw amino-acid sequence, 838 residues long: Protein translocase subunit SecA 1 (838 aa).

ATP is bound by residues Gln-85, 103–107, and Asp-493; that span reads GEGKT. Zn(2+) contacts are provided by Cys-823, Cys-825, Cys-834, and His-835.

Belongs to the SecA family. Monomer and homodimer. Part of the essential Sec protein translocation apparatus which comprises SecA, SecYEG and auxiliary proteins SecDF. Other proteins may also be involved. Requires Zn(2+) as cofactor.

Its subcellular location is the cell membrane. It is found in the cytoplasm. The catalysed reaction is ATP + H2O + cellular proteinSide 1 = ADP + phosphate + cellular proteinSide 2.. Its function is as follows. Part of the Sec protein translocase complex. Interacts with the SecYEG preprotein conducting channel. Has a central role in coupling the hydrolysis of ATP to the transfer of proteins into and across the cell membrane, serving as an ATP-driven molecular motor driving the stepwise translocation of polypeptide chains across the membrane. In Streptococcus gordonii, this protein is Protein translocase subunit SecA 1.